Consider the following 43-residue polypeptide: Jararafibrase-3 (43 aa).

The C-type lectin domain occupies 10–43; it reads MNGLYYKIFDELKAWKDAEMFCRKYKPGWHLASF.

The protein belongs to the true venom lectin family. As to quaternary structure, monomer. Expressed by the venom gland.

The protein resides in the secreted. With respect to regulation, inhibited by 1,10-phenanthroline and EDTA. May have both metalloproteinase and lectin activities. Induces local hemorrhage in the skin of rats. Degrades type-IV collagen, gelatin, laminin and fibronectin. Has hemagglutinating activity on red blood cells. This chain is Jararafibrase-3, found in Bothrops jararaca (Jararaca).